The chain runs to 370 residues: 3-isopropylmalate dehydrogenase (370 aa).

Residue 76-89 (GPKWDQNPSELRPE) participates in NAD(+) binding. Substrate contacts are provided by Arg96, Arg106, Arg134, and Asp224. Mg(2+)-binding residues include Asp224, Asp248, and Asp252. Position 282-294 (282-294 (GSAPDIAGQNIAN)) interacts with NAD(+).

This sequence belongs to the isocitrate and isopropylmalate dehydrogenases family. LeuB type 1 subfamily. Homodimer. Mg(2+) is required as a cofactor. The cofactor is Mn(2+).

The protein resides in the cytoplasm. It catalyses the reaction (2R,3S)-3-isopropylmalate + NAD(+) = 4-methyl-2-oxopentanoate + CO2 + NADH. It participates in amino-acid biosynthesis; L-leucine biosynthesis; L-leucine from 3-methyl-2-oxobutanoate: step 3/4. Its function is as follows. Catalyzes the oxidation of 3-carboxy-2-hydroxy-4-methylpentanoate (3-isopropylmalate) to 3-carboxy-4-methyl-2-oxopentanoate. The product decarboxylates to 4-methyl-2 oxopentanoate. The protein is 3-isopropylmalate dehydrogenase of Bacillus licheniformis (strain ATCC 14580 / DSM 13 / JCM 2505 / CCUG 7422 / NBRC 12200 / NCIMB 9375 / NCTC 10341 / NRRL NRS-1264 / Gibson 46).